A 233-amino-acid polypeptide reads, in one-letter code: Small ribosomal subunit protein uS3 (233 aa).

The KH type-2 domain occupies 39-107 (VRQFLNKELE…PAQINIAEVR (69 aa)).

This sequence belongs to the universal ribosomal protein uS3 family. As to quaternary structure, part of the 30S ribosomal subunit. Forms a tight complex with proteins S10 and S14.

In terms of biological role, binds the lower part of the 30S subunit head. Binds mRNA in the 70S ribosome, positioning it for translation. The polypeptide is Small ribosomal subunit protein uS3 (Edwardsiella ictaluri (strain 93-146)).